The chain runs to 153 residues: E3 ubiquitin-protein ligase AIRP1 (153 aa).

An RING-type; atypical zinc finger spans residues 104–145; sequence CPICLEEYEIDNPKLLTKCGHDFHLACILAWMERSEACPVCD.

It localises to the cytoplasm. Its subcellular location is the cytosol. It carries out the reaction S-ubiquitinyl-[E2 ubiquitin-conjugating enzyme]-L-cysteine + [acceptor protein]-L-lysine = [E2 ubiquitin-conjugating enzyme]-L-cysteine + N(6)-ubiquitinyl-[acceptor protein]-L-lysine.. Possesses E3 ubiquitin-protein ligase activity in vitro when associated with the E2 enzyme UBC8 in vitro. Plays combinatory roles with AIRP2 in the positive regulation of the abscisic acid-mediated drought stress response. This Arabidopsis thaliana (Mouse-ear cress) protein is E3 ubiquitin-protein ligase AIRP1.